Here is a 335-residue protein sequence, read N- to C-terminus: Glycerol-3-phosphate dehydrogenase [NAD(P)+] (335 aa).

NADPH is bound by residues serine 15, tyrosine 16, histidine 36, and lysine 110. Residues lysine 110, glycine 139, and threonine 141 each contribute to the sn-glycerol 3-phosphate site. Alanine 143 lines the NADPH pocket. Residues lysine 195, aspartate 248, serine 258, arginine 259, and asparagine 260 each contribute to the sn-glycerol 3-phosphate site. Lysine 195 (proton acceptor) is an active-site residue. Arginine 259 provides a ligand contact to NADPH. The NADPH site is built by valine 283 and glutamate 285.

This sequence belongs to the NAD-dependent glycerol-3-phosphate dehydrogenase family.

It localises to the cytoplasm. It carries out the reaction sn-glycerol 3-phosphate + NAD(+) = dihydroxyacetone phosphate + NADH + H(+). The enzyme catalyses sn-glycerol 3-phosphate + NADP(+) = dihydroxyacetone phosphate + NADPH + H(+). Its pathway is membrane lipid metabolism; glycerophospholipid metabolism. Functionally, catalyzes the reduction of the glycolytic intermediate dihydroxyacetone phosphate (DHAP) to sn-glycerol 3-phosphate (G3P), the key precursor for phospholipid synthesis. This is Glycerol-3-phosphate dehydrogenase [NAD(P)+] from Haemophilus influenzae (strain ATCC 51907 / DSM 11121 / KW20 / Rd).